The primary structure comprises 107 residues: Thioredoxin (107 aa).

Residues 2–107 (PSPIQVTDFS…TLTNALKKYL (106 aa)) form the Thioredoxin domain. Catalysis depends on nucleophile residues Cys32 and Cys35. Cysteines 32 and 35 form a disulfide.

The protein belongs to the thioredoxin family.

The protein localises to the plastid. It is found in the chloroplast. Its function is as follows. Participates in various redox reactions through the reversible oxidation of its active center dithiol to a disulfide and catalyzes dithiol-disulfide exchange reactions. The sequence is that of Thioredoxin (trxA) from Cyanidium caldarium (Red alga).